The chain runs to 300 residues: Apolipoprotein E (300 aa).

Positions 1–18 (MKVLWAVLVVTLLAGCQA) are cleaved as a signal peptide. The interval 74-246 (VLMEDTMKEV…RLDEVREQME (173 aa)) is 8 X 22 AA approximate tandem repeats. 8 consecutive repeat copies span residues 75 to 95 (LMED…QELA), 96 to 117 (PMAE…ARLG), 118 to 139 (ADME…SMLG), 140 to 161 (HSAE…KRLL), 162 to 183 (RDAE…EGAE), 184 to 205 (RSVS…LRTA), 206 to 224 (ALTS…ERLR), and 225 to 243 (GRLE…EVRE). Methionine 137 carries the post-translational modification Methionine sulfoxide. A Phosphoserine modification is found at serine 141. Residues 152-162 (HLRKLRKRLLR) form an LDL and other lipoprotein receptors binding region. Residue 156-159 (LRKR) participates in heparin binding. The segment at 204–274 (TAALTSQPLQ…GWFEPMMEDI (71 aa)) is lipid-binding and lipoprotein association. Position 220-227 (220-227 (GERLRGRL)) interacts with heparin. The interval 262–274 (RLKGWFEPMMEDI) is specificity for association with VLDL.

The protein belongs to the apolipoprotein A1/A4/E family. As to quaternary structure, homotetramer. May interact with ABCA1; functionally associated with ABCA1 in the biogenesis of HDLs. May interact with APP/A4 amyloid-beta peptide; the interaction is extremely stable in vitro but its physiological significance is unclear. May interact with MAPT. May interact with MAP2. In the cerebrospinal fluid, interacts with secreted SORL1. Interacts with PMEL; this allows the loading of PMEL luminal fragment on ILVs to induce fibril nucleation. In terms of processing, APOE exists as multiple glycosylated and sialylated glycoforms within cells and in plasma. The extent of glycosylation and sialylation are tissue and context specific. Post-translationally, glycated in plasma VLDL. Phosphorylated by FAM20C in the extracellular medium.

The protein localises to the secreted. It is found in the extracellular space. It localises to the extracellular matrix. The protein resides in the extracellular vesicle. Its subcellular location is the endosome. The protein localises to the multivesicular body. In terms of biological role, APOE is an apolipoprotein, a protein associating with lipid particles, that mainly functions in lipoprotein-mediated lipid transport between organs via the plasma and interstitial fluids. APOE is a core component of plasma lipoproteins and is involved in their production, conversion and clearance. Apolipoproteins are amphipathic molecules that interact both with lipids of the lipoprotein particle core and the aqueous environment of the plasma. As such, APOE associates with chylomicrons, chylomicron remnants, very low density lipoproteins (VLDL) and intermediate density lipoproteins (IDL) but shows a preferential binding to high-density lipoproteins (HDL). It also binds a wide range of cellular receptors including the LDL receptor/LDLR, the LDL receptor-related proteins LRP1, LRP2 and LRP8 and the very low-density lipoprotein receptor/VLDLR that mediate the cellular uptake of the APOE-containing lipoprotein particles. Finally, APOE also has a heparin-binding activity and binds heparan-sulfate proteoglycans on the surface of cells, a property that supports the capture and the receptor-mediated uptake of APOE-containing lipoproteins by cells. A main function of APOE is to mediate lipoprotein clearance through the uptake of chylomicrons, VLDLs, and HDLs by hepatocytes. APOE is also involved in the biosynthesis by the liver of VLDLs as well as their uptake by peripheral tissues ensuring the delivery of triglycerides and energy storage in muscle, heart and adipose tissues. By participating in the lipoprotein-mediated distribution of lipids among tissues, APOE plays a critical role in plasma and tissues lipid homeostasis. APOE is also involved in two steps of reverse cholesterol transport, the HDLs-mediated transport of cholesterol from peripheral tissues to the liver, and thereby plays an important role in cholesterol homeostasis. First, it is functionally associated with ABCA1 in the biogenesis of HDLs in tissues. Second, it is enriched in circulating HDLs and mediates their uptake by hepatocytes. APOE also plays an important role in lipid transport in the central nervous system, regulating neuron survival and sprouting. This is Apolipoprotein E (APOE) from Dinomys branickii (Pacarana).